The sequence spans 318 residues: NADH-ubiquinone oxidoreductase chain 1 (318 aa).

The next 8 helical transmembrane spans lie at 2 to 22 (PMTN…FLML), 68 to 88 (ITLY…LWTP), 100 to 120 (LGLL…LWSG), 146 to 166 (LAII…STLV), 171 to 191 (HLWL…STLA), 213 to 233 (IEYA…NIIM), 253 to 273 (ELYT…FLWI), and 285 to 305 (LMHL…MWYI).

The protein belongs to the complex I subunit 1 family. As to quaternary structure, core subunit of respiratory chain NADH dehydrogenase (Complex I) which is composed of 45 different subunits.

It localises to the mitochondrion inner membrane. The catalysed reaction is a ubiquinone + NADH + 5 H(+)(in) = a ubiquinol + NAD(+) + 4 H(+)(out). In terms of biological role, core subunit of the mitochondrial membrane respiratory chain NADH dehydrogenase (Complex I) which catalyzes electron transfer from NADH through the respiratory chain, using ubiquinone as an electron acceptor. Essential for the catalytic activity and assembly of complex I. This is NADH-ubiquinone oxidoreductase chain 1 (MT-ND1) from Pan troglodytes (Chimpanzee).